The primary structure comprises 520 residues: Bifunctional purine biosynthesis protein PurH (520 aa).

One can recognise an MGS-like domain in the interval 1–146 (MAPVALLSVS…KNHADVAVLT (146 aa)).

It belongs to the PurH family.

The enzyme catalyses (6R)-10-formyltetrahydrofolate + 5-amino-1-(5-phospho-beta-D-ribosyl)imidazole-4-carboxamide = 5-formamido-1-(5-phospho-D-ribosyl)imidazole-4-carboxamide + (6S)-5,6,7,8-tetrahydrofolate. It carries out the reaction IMP + H2O = 5-formamido-1-(5-phospho-D-ribosyl)imidazole-4-carboxamide. It functions in the pathway purine metabolism; IMP biosynthesis via de novo pathway; 5-formamido-1-(5-phospho-D-ribosyl)imidazole-4-carboxamide from 5-amino-1-(5-phospho-D-ribosyl)imidazole-4-carboxamide (10-formyl THF route): step 1/1. Its pathway is purine metabolism; IMP biosynthesis via de novo pathway; IMP from 5-formamido-1-(5-phospho-D-ribosyl)imidazole-4-carboxamide: step 1/1. This Synechococcus sp. (strain CC9605) protein is Bifunctional purine biosynthesis protein PurH.